The primary structure comprises 321 residues: Ribosomal RNA small subunit methyltransferase H (321 aa).

Residues 40 to 42 (GGH), Asp-60, Phe-84, Asp-106, and Gln-113 each bind S-adenosyl-L-methionine.

It belongs to the methyltransferase superfamily. RsmH family.

It is found in the cytoplasm. It catalyses the reaction cytidine(1402) in 16S rRNA + S-adenosyl-L-methionine = N(4)-methylcytidine(1402) in 16S rRNA + S-adenosyl-L-homocysteine + H(+). Specifically methylates the N4 position of cytidine in position 1402 (C1402) of 16S rRNA. The chain is Ribosomal RNA small subunit methyltransferase H from Haemophilus influenzae (strain ATCC 51907 / DSM 11121 / KW20 / Rd).